The primary structure comprises 224 residues: uncharacterized protein (224 aa).

The tract at residues 128 to 224 (VPSVQLHQIP…TNKRKKRLQF (97 aa)) is disordered. Polar residues predominate over residues 129-138 (PSVQLHQIPT). A compositionally biased stretch (basic residues) spans 139–156 (RSRRSSKPRKPRKKRKER). Basic and acidic residues predominate over residues 167 to 182 (LLREMDRLMTKQRDAL). Positions 185–195 (SESSSYFSSDS) are enriched in low complexity.

This is an uncharacterized protein from Torque teno sus virus 1 (isolate Sd-TTV31).